The sequence spans 647 residues: Exoribonuclease 2 (647 aa).

In terms of domain architecture, RNB spans Arg190–Lys519. An S1 motif domain is found at Glu564–Val646.

It belongs to the RNR ribonuclease family. RNase II subfamily.

The protein resides in the cytoplasm. The enzyme catalyses Exonucleolytic cleavage in the 3'- to 5'-direction to yield nucleoside 5'-phosphates.. Involved in mRNA degradation. Hydrolyzes single-stranded polyribonucleotides processively in the 3' to 5' direction. The polypeptide is Exoribonuclease 2 (Erwinia tasmaniensis (strain DSM 17950 / CFBP 7177 / CIP 109463 / NCPPB 4357 / Et1/99)).